The chain runs to 241 residues: 15,16-dihydrobiliverdin:ferredoxin oxidoreductase (241 aa).

The tract at residues 16 to 35 (RGGQPAAVPEGLEHCHSSKS) is disordered.

Belongs to the HY2 family.

It catalyses the reaction 15,16-dihydrobiliverdin + oxidized 2[4Fe-4S]-[ferredoxin] = biliverdin IXalpha + reduced 2[4Fe-4S]-[ferredoxin] + 2 H(+). Functionally, catalyzes the two-electron reduction of biliverdin IX-alpha at the C15 methine bridge. In Synechococcus sp. (strain WH7803), this protein is 15,16-dihydrobiliverdin:ferredoxin oxidoreductase.